A 210-amino-acid chain; its full sequence is Thymidylate kinase (210 aa).

Position 14 to 21 (14 to 21) interacts with ATP; it reads GLDRSGKS.

This sequence belongs to the thymidylate kinase family.

The catalysed reaction is dTMP + ATP = dTDP + ADP. It functions in the pathway pyrimidine metabolism; dTTP biosynthesis. In terms of biological role, catalyzes the conversion of dTMP to dTDP. This Schizosaccharomyces pombe (strain 972 / ATCC 24843) (Fission yeast) protein is Thymidylate kinase (tmp1).